The following is a 144-amino-acid chain: Transcription antitermination protein NusB (144 aa).

It belongs to the NusB family.

Functionally, involved in transcription antitermination. Required for transcription of ribosomal RNA (rRNA) genes. Binds specifically to the boxA antiterminator sequence of the ribosomal RNA (rrn) operons. This Dictyoglomus thermophilum (strain ATCC 35947 / DSM 3960 / H-6-12) protein is Transcription antitermination protein NusB.